A 403-amino-acid polypeptide reads, in one-letter code: RILP-like protein 1 (403 aa).

S7 is modified (phosphoserine). Residues A10–K97 enclose the RH1 domain. An S-nitrosocysteine modification is found at C47. The stretch at E76 to E265 forms a coiled coil. The RH2 domain maps to R291–L356. Residues E329 to Q348 form a disordered region.

It belongs to the RILPL family. As to quaternary structure, interacts (when S-nitrosylated) with GAPDH. Interacts with RAB8A; interaction is dependent on the phosphorylation of 'Thr-72' of RAB8A. Interacts with RAB10 and RAB12; the interaction is dependent on the phosphorylation of 'Thr-73' of RAB10, and 'Ser-105' of RAB12. S-nitrosylation is required for the interaction with GAPDH.

Its subcellular location is the cytoplasm. It is found in the cytosol. It localises to the cytoskeleton. The protein localises to the microtubule organizing center. The protein resides in the centrosome. Its subcellular location is the centriole. It is found in the cilium basal body. Its function is as follows. Plays a role in the regulation of cell shape and polarity. Plays a role in cellular protein transport, including protein transport away from primary cilia. Neuroprotective protein, which acts by sequestring GAPDH in the cytosol and prevent the apoptotic function of GAPDH in the nucleus. Competes with SIAH1 for binding GAPDH. Does not regulate lysosomal morphology and distribution. Binds to RAB10 following LRRK2-mediated RAB10 phosphorylation which leads to inhibition of ciliogenesis. This is RILP-like protein 1 (RILPL1) from Bos taurus (Bovine).